A 274-amino-acid chain; its full sequence is Long chain fatty acid elongase 2 (274 aa).

Helical transmembrane passes span 29-49 (MSTFVPLSYKIMIGYLVTIYF), 73-93 (FSLFSGIAAYKLIPELFGVFM), 115-135 (FWGWAFVMSKAPELGDTMFLV), 140-160 (PVIFMHWYHHALTFVYAVVTY), 170-190 (SLALNLAVHTVMYFYFAVRAL), 201-221 (FITTIQIVQFVISCYIFGHLV), and 238-258 (VLSIGGLMYISYLFLFAKFFY).

The protein belongs to the ELO family. In terms of tissue distribution, expressed in various tissues and parts of the body, including the ventral cord, pharyngeal muscles, uterus, and the tail, and most strongly in intestinal cells.

The protein resides in the membrane. It carries out the reaction hexadecanoyl-CoA + malonyl-CoA + H(+) = 3-oxooctadecanoyl-CoA + CO2 + CoA. The protein operates within lipid metabolism; fatty acid biosynthesis. Catalyzes the first and rate-limiting reaction of the four reactions that constitute the long-chain fatty acids elongation cycle. Uses malonyl-CoA to add 2 carbons per cycle to the chain of long-chain fatty acids. Condensing enzyme responsible for the elongation of palmitate (hexadecanoate, 16:0), also involved in polyunsaturated fatty acid (PUFA) biosynthesis. In Caenorhabditis elegans, this protein is Long chain fatty acid elongase 2.